The sequence spans 121 residues: Small ribosomal subunit protein uS13 (121 aa).

Residues 94–121 (GLPLRGQRTRTNARTRKGPRKAGVALKK) form a disordered region.

Belongs to the universal ribosomal protein uS13 family. In terms of assembly, part of the 30S ribosomal subunit. Forms a loose heterodimer with protein S19. Forms two bridges to the 50S subunit in the 70S ribosome.

Located at the top of the head of the 30S subunit, it contacts several helices of the 16S rRNA. In the 70S ribosome it contacts the 23S rRNA (bridge B1a) and protein L5 of the 50S subunit (bridge B1b), connecting the 2 subunits; these bridges are implicated in subunit movement. Contacts the tRNAs in the A and P-sites. In Ralstonia nicotianae (strain ATCC BAA-1114 / GMI1000) (Ralstonia solanacearum), this protein is Small ribosomal subunit protein uS13.